Consider the following 1457-residue polypeptide: Bridge-like lipid transfer protein family member 3B (1457 aa).

One can recognise a Chorein N-terminal domain in the interval 3 to 94 (GIIKKQILKH…DKVIMEMSTC (92 aa)). 2 disordered regions span residues 267–295 (STEQ…KTPQ) and 409–449 (DRNL…PQPS). A compositionally biased stretch (polar residues) spans 278–295 (PTQSSTVTSSAQHVKTPQ). Phosphoserine occurs at positions 414, 418, 774, and 934. Disordered stretches follow at residues 975–1038 (SEDE…TGKG), 1056–1099 (ASLS…LSVS), and 1145–1183 (SNTS…TQEN). A compositionally biased stretch (polar residues) spans 980–995 (SGLSHKSGSGEMTSEG). A Phosphoserine modification is found at Ser1008. Positions 1145 to 1180 (SNTSCQSPAESVNTSANTQTCGEASPEAVSTNSEGT) are enriched in polar residues. A coiled-coil region spans residues 1410 to 1455 (ANFLDITREQLMEENECLRQRLAQAKMELAEAHSARDELLHQMKRM).

In terms of assembly, homodimer (via N-terminus). Associates with the Golgi-associated retrograde protein (GARP) complex. Interacts with GARP complex component VPS52. Interacts (via C-terminal coiled-coil domain) with STX6.

It localises to the cytoplasm. It is found in the cytosol. The protein resides in the early endosome. Tube-forming lipid transport protein which mediates the transfer of lipids between membranes at organelle contact sites. Required for retrograde traffic of vesicle clusters in the early endocytic pathway to the Golgi complex. The protein is Bridge-like lipid transfer protein family member 3B (Bltp3b) of Mus musculus (Mouse).